A 174-amino-acid polypeptide reads, in one-letter code: UPF0340 protein SE_1711 (174 aa).

The protein belongs to the UPF0340 family.

This is UPF0340 protein SE_1711 from Staphylococcus epidermidis (strain ATCC 12228 / FDA PCI 1200).